The following is a 628-amino-acid chain: FAD-linked oxidoreductase easE (628 aa).

Residues 1–20 form the signal peptide; the sequence is MSHRILCVAFCVCSLVAVSS. In terms of domain architecture, FAD-binding PCMH-type spans 144–328; sequence HQGRIPLYSA…TRATMRVHLN (185 aa). Pros-8alpha-FAD histidine is present on His182. Asn343, Asn382, and Asn487 each carry an N-linked (GlcNAc...) asparagine glycan.

It belongs to the oxygen-dependent FAD-linked oxidoreductase family. FAD serves as cofactor.

It functions in the pathway alkaloid biosynthesis; ergot alkaloid biosynthesis. In terms of biological role, FAD binding oxidoreductase; part of the gene cluster that mediates the biosynthesis of fumiclavanine C, a fungal ergot alkaloid. DmaW catalyzes the first step of ergot alkaloid biosynthesis by condensing dimethylallyl diphosphate (DMAP) and tryptophan to form 4-dimethylallyl-L-tryptophan. The second step is catalyzed by the methyltransferase easF that methylates 4-dimethylallyl-L-tryptophan in the presence of S-adenosyl-L-methionine, resulting in the formation of 4-dimethylallyl-L-abrine. The catalase easC and the FAD-dependent oxidoreductase easE then transform 4-dimethylallyl-L-abrine to chanoclavine-I which is further oxidized by EasD in the presence of NAD(+), resulting in the formation of chanoclavine-I aldehyde. EasA reduces chanoclavine-I aldehyde to dihydrochanoclavine-I aldehyde that spontaneously dehydrates to form 6,8-dimethyl-6,7-didehydroergoline. EasG then catalyzes the reduction of 6,8-dimethyl-6,7-didehydroergoline to form festuclavine. Hydrolysis of festuclavine by easM then leads to the formation of fumigaclavine B which is in turn acetylated by easN to fumigaclavine A. Finally, easL catalyzes the conversion of fumigaclavine A into fumigaclavine C by attaching a dimethylallyl moiety to C-2 of the indole nucleus. The sequence is that of FAD-linked oxidoreductase easE from Aspergillus fumigatus (strain ATCC MYA-4609 / CBS 101355 / FGSC A1100 / Af293) (Neosartorya fumigata).